The sequence spans 158 residues: Transcription antitermination protein NusB (158 aa).

Residues 1–12 (MKRVEKRAEKQG) are compositionally biased toward basic and acidic residues. Residues 1–20 (MKRVEKRAEKQGRGTARKSR) form a disordered region.

This sequence belongs to the NusB family.

Involved in transcription antitermination. Required for transcription of ribosomal RNA (rRNA) genes. Binds specifically to the boxA antiterminator sequence of the ribosomal RNA (rrn) operons. The chain is Transcription antitermination protein NusB from Nitrosospira multiformis (strain ATCC 25196 / NCIMB 11849 / C 71).